The following is a 379-amino-acid chain: L-demethylnoviosyl transferase (379 aa).

This sequence belongs to the glycosyltransferase 28 family.

The enzyme catalyses dTDP-4-O-demethyl-beta-L-noviose + novobiocic acid = desmethyldescarbamoylnovobiocin + dTDP + H(+). Its pathway is antibiotic biosynthesis; novobiocin biosynthesis. With respect to regulation, inhibited by TDP-L-rhamnose, the sugar donor that most closely structurally resembles the natural substrate dTDP-beta-L-noviose. Functionally, catalyzes the transfer of L-noviose from dTDP-4-O-demethyl-beta-L-noviose to the phenolic oxygen of novobiocic acid, creating the full ABC ring system in the novobiocin biosynthesis pathway. Novobiocin is an aminocoumarin family antibiotic that targets bacterial DNA gyrases. Also shows activity with variant coumarin aglycones, suggesting it may be a promiscuous catalyst for noviosylation of a range of planar scaffolds. Does not show activity with TDP-L-rhamnose. The sequence is that of L-demethylnoviosyl transferase (novM) from Streptomyces niveus (Streptomyces spheroides).